A 157-amino-acid chain; its full sequence is Baculoviral IAP repeat-containing protein 5.2-A (157 aa).

Residues 31–101 (RLRTFSNWPF…KHSPSCLFIA (71 aa)) form a BIR repeat. Thr47 is modified (phosphothreonine; by CDK1). Zn(2+)-binding residues include Cys70, Cys73, His90, and Cys97.

The protein belongs to the IAP family. As to quaternary structure, component of the CPC at least composed of survivin/birc5, incenp, cdca8/borealin and/or cdca9/dasra-A, and aurkb/aurora-B. Interacts directly with incenp (via N-terminus). Interacts with rxra; the interaction is stronger in the absence of 9-cis retinoic acids. Post-translationally, ubiquitination is required for centrosome-targeting. As to expression, highly expressed in vascular endothelial cells of tadpoles.

The protein resides in the cytoplasm. It is found in the nucleus. The protein localises to the chromosome. Its subcellular location is the centromere. It localises to the cytoskeleton. The protein resides in the spindle. In terms of biological role, component of the chromosomal passenger complex (CPC), a complex that acts as a key regulator of mitosis. The CPC complex has essential functions at the centromere in ensuring correct chromosome alignment and segregation and is required for chromatin-induced microtubule stabilization and spindle assembly. Does not appear to exhibit anti-apoptotic activity. Plays a role in increasing blood vessel size during development. This is Baculoviral IAP repeat-containing protein 5.2-A (birc5.2-a) from Xenopus laevis (African clawed frog).